Here is a 380-residue protein sequence, read N- to C-terminus: Maintenance of mitochondrial morphology protein 1 (380 aa).

The Lumenal segment spans residues 1–64; it reads MQGRAIWAEG…IVPSLSFIQG (64 aa). A helical transmembrane segment spans residues 65–85; sequence FMAGQAVLLMLFLGLFRYFFM. Residues 86 to 380 are Cytoplasmic-facing; it reads TSSPGTRAQQ…IGTSPADPLA (295 aa). Residues 147–369 form the SMP-LTD domain; the sequence is APESLDWLNV…WPHFWHIPLP (223 aa).

It belongs to the MMM1 family. As to quaternary structure, homodimer. Component of the ER-mitochondria encounter structure (ERMES) or MDM complex, composed of MMM1, MDM10, MDM12 and MDM34. An MMM1 homodimer associates with one molecule of MDM12 on each side in a pairwise head-to-tail manner, and the SMP-LTD domains of MMM1 and MDM12 generate a continuous hydrophobic tunnel for phospholipid trafficking.

Its subcellular location is the endoplasmic reticulum membrane. In terms of biological role, component of the ERMES/MDM complex, which serves as a molecular tether to connect the endoplasmic reticulum (ER) and mitochondria. Components of this complex are involved in the control of mitochondrial shape and protein biogenesis, and function in nonvesicular lipid trafficking between the ER and mitochondria. The MDM12-MMM1 subcomplex functions in the major beta-barrel assembly pathway that is responsible for biogenesis of all outer membrane beta-barrel proteins, and acts in a late step after the SAM complex. The MDM10-MDM12-MMM1 subcomplex further acts in the TOM40-specific pathway after the action of the MDM12-MMM1 complex. Essential for establishing and maintaining the structure of mitochondria and maintenance of mtDNA nucleoids. In Malassezia globosa (strain ATCC MYA-4612 / CBS 7966) (Dandruff-associated fungus), this protein is Maintenance of mitochondrial morphology protein 1.